The sequence spans 147 residues: Lysozyme C-1 (147 aa).

The signal sequence occupies residues 1-18; it reads MKALIILGLLCLSVAVQG. Residues 19 to 147 form the C-type lysozyme domain; sequence KVFERCELAR…VSSYVEGCSL (129 aa). Disulfide bonds link cysteine 24/cysteine 145, cysteine 48/cysteine 133, cysteine 83/cysteine 99, and cysteine 95/cysteine 113. Active-site residues include glutamate 53 and aspartate 71.

Belongs to the glycosyl hydrolase 22 family. As to quaternary structure, monomer. Expressed in stomach.

Its subcellular location is the secreted. It catalyses the reaction Hydrolysis of (1-&gt;4)-beta-linkages between N-acetylmuramic acid and N-acetyl-D-glucosamine residues in a peptidoglycan and between N-acetyl-D-glucosamine residues in chitodextrins.. Its function is as follows. Lysozymes have primarily a bacteriolytic function; those in tissues and body fluids are associated with the monocyte-macrophage system and enhance the activity of immunoagents. The polypeptide is Lysozyme C-1 (Ovis aries (Sheep)).